Consider the following 6077-residue polypeptide: Nonribosomal peptide synthetase nlsA (6077 aa).

The segment at 417-618 is adenylation 1; the sequence is VFAYAPLIHG…LGRKDSQIKL (202 aa). In terms of domain architecture, Carrier 1 spans 751 to 827; the sequence is HSEVTVEDRL…DLVTRVQEIK (77 aa). Ser788 bears the O-(pantetheine 4'-phosphoryl)serine mark. Condensation stretches follow at residues 842 to 1267 and 1309 to 1737; these read LSPI…GKRL and EDIY…KQRI. 2 adenylation regions span residues 1757 to 2149 and 2755 to 3157; these read QEKM…YLGE and DRVI…QVKL. Positions 3297-3373 constitute a Carrier 2 domain; that stretch reads AVERAAESTL…DMAKCCDDTE (77 aa). Ser3334 carries the post-translational modification O-(pantetheine 4'-phosphoryl)serine. Residues 3524 to 3779 are condensation 3; sequence DSRYRQCLYK…LLSVPRDSLM (256 aa). An adenylation 4 region spans residues 3816–4213; that stretch reads ENAIMHPQAT…LGRKDHQVKL (398 aa). The Carrier 3 domain maps to 4361–4437; sequence REGDATPAII…ELAVSCGTKP (77 aa). Residue Ser4398 is modified to O-(pantetheine 4'-phosphoryl)serine. 2 condensation regions span residues 4451-4869 and 4916-5260; these read PLSP…RVLE and VEDI…EDKT. The 77-residue stretch at 5334 to 5410 folds into the Carrier 4 domain; it reads RAPNDSEKQL…NMMALINDRK (77 aa). Ser5371 is modified (O-(pantetheine 4'-phosphoryl)serine). Positions 5476–5885 are condensation 6; it reads DVLPVTDFQA…SLVANPNVAL (410 aa). The 84-residue stretch at 5921–6004 folds into the Carrier 5 domain; sequence SEILVHSDLI…GHMAVLALNM (84 aa). A compositionally biased stretch (low complexity) spans 6013–6027; sequence DSDAAPAPAYAPVDA. A disordered region spans residues 6013–6047; it reads DSDAAPAPAYAPVDARASRNVSTSRQQQEGLPLPA. The span at 6031–6041 shows a compositional bias: polar residues; it reads RNVSTSRQQQE.

Belongs to the NRP synthetase family.

It functions in the pathway secondary metabolite biosynthesis. Nonribosomal peptide synthetase involved in the synthesis of nidulanin A and derived compounds. Nidulanin A is a tetracyclopeptide with the sequence L-Phe-L-Kyn-L-Val-D-Val and an isoprene unit N-linked to the amino group of L-kynurenine. The NRPS nlsA is responsible of the synthesis of the cyclopeptide and the prenyltransferase nptA adds the isoprene unit on the L-kynurenine residue of nidulanin A. Further modifications lead to additional oxygenated related compounds. This Emericella nidulans (strain FGSC A4 / ATCC 38163 / CBS 112.46 / NRRL 194 / M139) (Aspergillus nidulans) protein is Nonribosomal peptide synthetase nlsA.